A 121-amino-acid chain; its full sequence is uncharacterized protein (121 aa).

Disordered regions lie at residues 24 to 43 (SGRTGGQRKGASLARPGRGG) and 100 to 121 (DHENSQNNSKRRCKVNCETDQR).

This is an uncharacterized protein from Homo sapiens (Human).